Consider the following 265-residue polypeptide: Cell adhesion molecule CEACAM10 (265 aa).

The N-terminal stretch at 1–33 (MELASAHLHKGQVPWVGLLLTASLLTYWSPATT) is a signal peptide. 2 Ig-like V-type domains span residues 35-142 (QVTV…HVHP) and 155-262 (QVTV…NVHA). 3 N-linked (GlcNAc...) asparagine glycosylation sites follow: asparagine 44, asparagine 87, and asparagine 224.

This sequence belongs to the immunoglobulin superfamily. CEA family. In terms of tissue distribution, abundant in seminal vesicle and traces in epididymis and prostate (at protein level). Highly expressed in seminal vesicle, minor in colon and placenta and, to a lesser extent, in small intestine, caecum, stomach, salivary gland and bone marrow.

It is found in the secreted. The protein localises to the extracellular space. Its function is as follows. May interact with other CEACAM proteins on the sperm surface. The sequence is that of Cell adhesion molecule CEACAM10 from Mus musculus (Mouse).